A 215-amino-acid chain; its full sequence is UPF0056 membrane protein BU267 (215 aa).

Helical transmembrane passes span 14 to 34 (FFIGLCALVNPIGMIPIFTTM), 56 to 76 (LILLISLFFGSNILNIFGISI), 81 to 101 (IAGGILIISIAFSMISGQFIK), 120 to 140 (VVPLAMPLIAGPGAISSTIVW), 150 to 170 (LFLCSLVIFLFSFVCWLCFEA), and 189 to 209 (IMGLLLMSLGIEFISTGIGAI).

It belongs to the UPF0056 (MarC) family.

Its subcellular location is the cell membrane. In Buchnera aphidicola subsp. Acyrthosiphon pisum (strain APS) (Acyrthosiphon pisum symbiotic bacterium), this protein is UPF0056 membrane protein BU267.